We begin with the raw amino-acid sequence, 160 residues long: MAVKKVVTHPAEVLETPAETVTVFDKKLKKLLDDMYDTMLEMDGVGLAAPQIGILKRAAVVEIGDDRGRIDLVNPEILEKSGEQTGIEGCLSFPNVYGDVTRADYVKVRAFNRQGKPFILEARGFLARAVQHEMDHLDGVLFTSKISKYYTEDELADMEG.

Positions 90 and 132 each coordinate Fe cation. Glu133 is an active-site residue. His136 lines the Fe cation pocket.

This sequence belongs to the polypeptide deformylase family. The cofactor is Fe(2+).

The enzyme catalyses N-terminal N-formyl-L-methionyl-[peptide] + H2O = N-terminal L-methionyl-[peptide] + formate. Functionally, removes the formyl group from the N-terminal Met of newly synthesized proteins. Requires at least a dipeptide for an efficient rate of reaction. N-terminal L-methionine is a prerequisite for activity but the enzyme has broad specificity at other positions. The polypeptide is Peptide deformylase 1 (defA) (Bacillus subtilis (strain 168)).